Reading from the N-terminus, the 439-residue chain is Hydrogenobyrinate a,c-diamide synthase (439 aa).

The GATase cobBQ-type domain maps to 247 to 439; the sequence is RIALAEDGAF…FFHAIARASA (193 aa). Cys329 serves as the catalytic Nucleophile.

It belongs to the CobB/CbiA family. Requires Mg(2+) as cofactor.

The enzyme catalyses hydrogenobyrinate + 2 L-glutamine + 2 ATP + 2 H2O = hydrogenobyrinate a,c-diamide + 2 L-glutamate + 2 ADP + 2 phosphate + 2 H(+). The protein operates within cofactor biosynthesis; adenosylcobalamin biosynthesis; cob(II)yrinate a,c-diamide from precorrin-2 (aerobic route): step 9/10. Catalyzes the ATP-dependent amidation of the two carboxylate groups at positions a and c of hydrogenobyrinate, using either L-glutamine or ammonia as the nitrogen source. The polypeptide is Hydrogenobyrinate a,c-diamide synthase (Mesorhizobium japonicum (strain LMG 29417 / CECT 9101 / MAFF 303099) (Mesorhizobium loti (strain MAFF 303099))).